We begin with the raw amino-acid sequence, 423 residues long: Replication factor C large subunit (423 aa).

Residue 50 to 57 (GPAGCGKT) participates in ATP binding.

It belongs to the activator 1 small subunits family. RfcL subfamily. As to quaternary structure, heteromultimer composed of small subunits (RfcS) and large subunits (RfcL).

Part of the RFC clamp loader complex which loads the PCNA sliding clamp onto DNA. The sequence is that of Replication factor C large subunit from Staphylothermus marinus (strain ATCC 43588 / DSM 3639 / JCM 9404 / F1).